The sequence spans 601 residues: Glutathione-regulated potassium-efflux system protein KefB (601 aa).

13 helical membrane passes run 4-24, 29-49, 55-75, 87-107, 111-131, 152-172, 177-197, 207-227, 230-250, 262-282, 284-304, 324-344, and 356-376; these read ADLL…VPLA, IGAV…GLGF, EILH…GLEL, IFGV…GLLM, FLWQ…TAMA, VLLF…LLAG, HFDW…LIGG, FIAA…LVLS, LFMD…GVLL, AIDP…GMSL, LGVL…LVVI, MQFA…FSTA, and ALLL…MKGI. Residues 400 to 519 form the RCK N-terminal domain; it reads KPQVIVVGFG…AGVTQFSRET (120 aa).

It belongs to the monovalent cation:proton antiporter 2 (CPA2) transporter (TC 2.A.37) family. KefB subfamily. Interacts with the regulatory subunit KefG.

The protein localises to the cell inner membrane. In terms of biological role, pore-forming subunit of a potassium efflux system that confers protection against electrophiles. Catalyzes K(+)/H(+) antiport. This is Glutathione-regulated potassium-efflux system protein KefB from Salmonella enteritidis PT4 (strain P125109).